Here is a 335-residue protein sequence, read N- to C-terminus: MGRLILEHTLQGHKGRIWGVAWHPKGNVFASCGEDKAIRIWSLTGNTWSTKTILSDGHKRTIREIRWSPCGQYLASASFDATTAIWSKSSGEFECNATLEGHENEVKSVSWSRSGGLLATCSRDKSVWIWEVAGDDEFECAAVLNPHTQDVKRVVWHPTKDVLASASYDNTIKMFAEEPIDNDWDCTATLTSHTSTVWGIDFDADGERLVSCSDDTTIKIWKAYHPGNTAGVATPEQQTVWKCVCTVSGQHSRAIYDVSWCKLTGLIATACGDDGIRIFKETSDSKPDEPTFEQITAEEGAHDQDVNSVQWNPVVAGQLISCSDDGTIKIWKVSE.

7 WD repeats span residues 12–51 (GHKGRIWGVAWHPKGNVFASCGEDKAIRIWSLTGNTWSTK), 57–96 (GHKRTIREIRWSPCGQYLASASFDATTAIWSKSSGEFECN), 101–140 (GHENEVKSVSWSRSGGLLATCSRDKSVWIWEVAGDDEFEC), 146–185 (PHTQDVKRVVWHPTKDVLASASYDNTIKMFAEEPIDNDWD), 192–231 (SHTSTVWGIDFDADGERLVSCSDDTTIKIWKAYHPGNTAG), 250–289 (QHSRAIYDVSWCKLTGLIATACGDDGIRIFKETSDSKPDE), and 301–335 (AHDQDVNSVQWNPVVAGQLISCSDDGTIKIWKVSE).

Belongs to the WD repeat CIA1 family.

Functionally, essential component of the cytosolic iron-sulfur (Fe/S) protein assembly machinery. Required for the maturation of extramitochondrial Fe/S proteins. The chain is Probable cytosolic iron-sulfur protein assembly protein Ciao1 from Drosophila simulans (Fruit fly).